The following is a 319-amino-acid chain: NADH-ubiquinone oxidoreductase chain 1 (319 aa).

8 consecutive transmembrane segments (helical) span residues 5 to 25 (TINS…LTLM), 72 to 92 (LLIS…TPIP), 102 to 122 (LGLL…LWAG), 146 to 166 (VTLG…TMQL), 173 to 193 (FTWL…STLA), 225 to 245 (FFLT…ILFI), 254 to 274 (ELFL…FLWI), and 295 to 315 (LPLT…TSGI).

The protein belongs to the complex I subunit 1 family.

The protein localises to the mitochondrion inner membrane. It catalyses the reaction a ubiquinone + NADH + 5 H(+)(in) = a ubiquinol + NAD(+) + 4 H(+)(out). In terms of biological role, core subunit of the mitochondrial membrane respiratory chain NADH dehydrogenase (Complex I) that is believed to belong to the minimal assembly required for catalysis. Complex I functions in the transfer of electrons from NADH to the respiratory chain. The immediate electron acceptor for the enzyme is believed to be ubiquinone. The polypeptide is NADH-ubiquinone oxidoreductase chain 1 (MT-ND1) (Varanus flavescens (Yellow monitor)).